Here is a 75-residue protein sequence, read N- to C-terminus: Small ribosomal subunit protein bS18 (75 aa).

It belongs to the bacterial ribosomal protein bS18 family. In terms of assembly, part of the 30S ribosomal subunit. Forms a tight heterodimer with protein bS6.

Functionally, binds as a heterodimer with protein bS6 to the central domain of the 16S rRNA, where it helps stabilize the platform of the 30S subunit. The chain is Small ribosomal subunit protein bS18 from Buchnera aphidicola subsp. Acyrthosiphon pisum (strain 5A).